The primary structure comprises 275 residues: Formamidopyrimidine-DNA glycosylase (275 aa).

Residue Pro2 is the Schiff-base intermediate with DNA of the active site. Glu3 functions as the Proton donor in the catalytic mechanism. The Proton donor; for beta-elimination activity role is filled by Lys58. 3 residues coordinate DNA: His93, Arg111, and Arg156. An FPG-type zinc finger spans residues 241–275 (FVYDRAGQPCRVCGTPIRQIVQGQRSTYYCPTCQR). The Proton donor; for delta-elimination activity role is filled by Arg265.

The protein belongs to the FPG family. In terms of assembly, monomer. The cofactor is Zn(2+).

It catalyses the reaction Hydrolysis of DNA containing ring-opened 7-methylguanine residues, releasing 2,6-diamino-4-hydroxy-5-(N-methyl)formamidopyrimidine.. The enzyme catalyses 2'-deoxyribonucleotide-(2'-deoxyribose 5'-phosphate)-2'-deoxyribonucleotide-DNA = a 3'-end 2'-deoxyribonucleotide-(2,3-dehydro-2,3-deoxyribose 5'-phosphate)-DNA + a 5'-end 5'-phospho-2'-deoxyribonucleoside-DNA + H(+). Functionally, involved in base excision repair of DNA damaged by oxidation or by mutagenic agents. Acts as a DNA glycosylase that recognizes and removes damaged bases. Has a preference for oxidized purines, such as 7,8-dihydro-8-oxoguanine (8-oxoG). Has AP (apurinic/apyrimidinic) lyase activity and introduces nicks in the DNA strand. Cleaves the DNA backbone by beta-delta elimination to generate a single-strand break at the site of the removed base with both 3'- and 5'-phosphates. The chain is Formamidopyrimidine-DNA glycosylase from Burkholderia cenocepacia (strain ATCC BAA-245 / DSM 16553 / LMG 16656 / NCTC 13227 / J2315 / CF5610) (Burkholderia cepacia (strain J2315)).